The primary structure comprises 274 residues: NH(3)-dependent NAD(+) synthetase (274 aa).

An ATP-binding site is contributed by 27–34; it reads GLSGGIDS. Asp33 is a binding site for Mg(2+). Arg121 is a deamido-NAD(+) binding site. Thr141 is an ATP binding site. Glu146 serves as a coordination point for Mg(2+). Positions 170 and 192 each coordinate ATP.

This sequence belongs to the NAD synthetase family. Homodimer.

The enzyme catalyses deamido-NAD(+) + NH4(+) + ATP = AMP + diphosphate + NAD(+) + H(+). It participates in cofactor biosynthesis; NAD(+) biosynthesis; NAD(+) from deamido-NAD(+) (ammonia route): step 1/1. Functionally, catalyzes the ATP-dependent amidation of deamido-NAD to form NAD. Uses ammonia as a nitrogen source. The polypeptide is NH(3)-dependent NAD(+) synthetase (Helicobacter hepaticus (strain ATCC 51449 / 3B1)).